The primary structure comprises 595 residues: Proline--tRNA ligase (595 aa).

This sequence belongs to the class-II aminoacyl-tRNA synthetase family. ProS type 1 subfamily. As to quaternary structure, homodimer.

The protein resides in the cytoplasm. The catalysed reaction is tRNA(Pro) + L-proline + ATP = L-prolyl-tRNA(Pro) + AMP + diphosphate. Catalyzes the attachment of proline to tRNA(Pro) in a two-step reaction: proline is first activated by ATP to form Pro-AMP and then transferred to the acceptor end of tRNA(Pro). As ProRS can inadvertently accommodate and process non-cognate amino acids such as alanine and cysteine, to avoid such errors it has two additional distinct editing activities against alanine. One activity is designated as 'pretransfer' editing and involves the tRNA(Pro)-independent hydrolysis of activated Ala-AMP. The other activity is designated 'posttransfer' editing and involves deacylation of mischarged Ala-tRNA(Pro). The misacylated Cys-tRNA(Pro) is not edited by ProRS. This is Proline--tRNA ligase from Treponema denticola (strain ATCC 35405 / DSM 14222 / CIP 103919 / JCM 8153 / KCTC 15104).